The sequence spans 143 residues: ATP synthase subunit b' (143 aa).

Residues 6-26 (ATLPLMALQFVLLAIILNAIF) form a helical membrane-spanning segment.

It belongs to the ATPase B chain family. In terms of assembly, F-type ATPases have 2 components, F(1) - the catalytic core - and F(0) - the membrane proton channel. F(1) has five subunits: alpha(3), beta(3), gamma(1), delta(1), epsilon(1). F(0) has four main subunits: a(1), b(1), b'(1) and c(10-14). The alpha and beta chains form an alternating ring which encloses part of the gamma chain. F(1) is attached to F(0) by a central stalk formed by the gamma and epsilon chains, while a peripheral stalk is formed by the delta, b and b' chains.

The protein resides in the cellular thylakoid membrane. Functionally, f(1)F(0) ATP synthase produces ATP from ADP in the presence of a proton or sodium gradient. F-type ATPases consist of two structural domains, F(1) containing the extramembraneous catalytic core and F(0) containing the membrane proton channel, linked together by a central stalk and a peripheral stalk. During catalysis, ATP synthesis in the catalytic domain of F(1) is coupled via a rotary mechanism of the central stalk subunits to proton translocation. Component of the F(0) channel, it forms part of the peripheral stalk, linking F(1) to F(0). The b'-subunit is a diverged and duplicated form of b found in plants and photosynthetic bacteria. The sequence is that of ATP synthase subunit b' from Crocosphaera subtropica (strain ATCC 51142 / BH68) (Cyanothece sp. (strain ATCC 51142)).